The chain runs to 62 residues: Short neurotoxin B (62 aa).

Positions 1–16 are enriched in polar residues; sequence RRCFNHPSSQPQTNKS. The interval 1 to 21 is disordered; that stretch reads RRCFNHPSSQPQTNKSCPPGE. 4 disulfides stabilise this stretch: C3/C24, C17/C41, C43/C54, and C55/C60.

Belongs to the three-finger toxin family. Short-chain subfamily. Type I alpha-neurotoxin sub-subfamily. Expressed by the venom gland.

It is found in the secreted. Functionally, binds to muscle nicotinic acetylcholine receptor (nAChR) and inhibit acetylcholine from binding to the receptor, thereby impairing neuromuscular transmission. In Laticauda crockeri (Crocker's sea snake), this protein is Short neurotoxin B.